We begin with the raw amino-acid sequence, 776 residues long: DExH-box ATP-dependent RNA helicase DExH18, mitochondrial (776 aa).

The N-terminal 84 residues, 1 to 84 (MARGVAGVLR…RSFSSTVDNN (84 aa)), are a transit peptide targeting the mitochondrion. Residues 80 to 101 (TVDNNGENDDIEESVGSESDDY) are disordered. A compositionally biased stretch (acidic residues) spans 85 to 101 (GENDDIEESVGSESDDY). One can recognise a Helicase ATP-binding domain in the interval 268 to 426 (FARAMKRKIV…RFKPLVVEAK (159 aa)). Residue 281-288 (GPTNSGKT) coordinates ATP. The DEIH box; degenerate signature appears at 361 to 364 (DEIQ). The Helicase C-terminal domain occupies 427–595 (TLLGELKNVK…LFAAQVPDMA (169 aa)).

The protein belongs to the DExH box helicase family. In terms of assembly, homodimer; in free form. Component of the mitochondrial degradosome (mtEXO) complex which is a heteropentamer containing 2 copies of SUPV3L1 and 3 copies of PNPT1. Mg(2+) is required as a cofactor. It depends on Mn(2+) as a cofactor.

The protein resides in the nucleus. Its subcellular location is the mitochondrion matrix. It localises to the mitochondrion nucleoid. The catalysed reaction is ATP + H2O = ADP + phosphate + H(+). Functionally, major helicase player in mitochondrial RNA metabolism. Component of the mitochondrial degradosome (mtEXO) complex, that degrades 3' overhang double-stranded RNA with a 3'-to-5' directionality in an ATP-dependent manner. ATPase and ATP-dependent multisubstrate helicase, able to unwind double-stranded (ds) DNA and RNA, and RNA/DNA heteroduplexes in the 5'-to-3' direction. Plays a role in the RNA surveillance system in mitochondria; regulates the stability of mature mRNAs, the removal of aberrantly formed mRNAs and the rapid degradation of non coding processing intermediates. The sequence is that of DExH-box ATP-dependent RNA helicase DExH18, mitochondrial from Arabidopsis thaliana (Mouse-ear cress).